The primary structure comprises 1121 residues: CRISPR-associated endonuclease Cas9 1 (1121 aa).

The active-site For RuvC-like nuclease domain is the Asp-9. The Mg(2+) site is built by Asp-9, Glu-509, and Glu-513. An HNH Cas9-type domain is found at 516-684 (EDDEKKAIQK…VRKKFIERNL (169 aa)). The active-site Proton acceptor for HNH nuclease domain is the His-599. His-738 is a binding site for Mg(2+).

It belongs to the CRISPR-associated protein Cas9 family. Subtype II-A subfamily. As to quaternary structure, monomer. Binds crRNA and tracrRNA. Mg(2+) serves as cofactor.

In terms of biological role, CRISPR (clustered regularly interspaced short palindromic repeat) is an adaptive immune system that provides protection against mobile genetic elements (viruses, transposable elements and conjugative plasmids). CRISPR clusters contain spacers, sequences complementary to antecedent mobile elements, and target invading nucleic acids. CRISPR clusters are transcribed and processed into CRISPR RNA (crRNA). In type II CRISPR systems correct processing of pre-crRNA requires a trans-encoded small RNA (tracrRNA), endogenous ribonuclease 3 (rnc) and this protein. The tracrRNA serves as a guide for ribonuclease 3-aided processing of pre-crRNA. Subsequently Cas9/crRNA/tracrRNA endonucleolytically cleaves linear or circular dsDNA target complementary to the spacer; Cas9 is inactive in the absence of the 2 guide RNAs (gRNA). Cas9 recognizes the protospacer adjacent motif (PAM) in the CRISPR repeat sequences to help distinguish self versus nonself, as targets within the bacterial CRISPR locus do not have PAMs. PAM recognition is also required for catalytic activity. Cuts target DNA when Cas9 and gRNAs are mixed. The polypeptide is CRISPR-associated endonuclease Cas9 1 (Streptococcus thermophilus (strain ATCC BAA-491 / LMD-9)).